Here is a 337-residue protein sequence, read N- to C-terminus: Protein ABHD13 (337 aa).

A helical; Signal-anchor for type II membrane protein membrane pass occupies residues 30–50 (LLALILTFHLYGGFVLLGLIL). Residues S193, D268, and H298 each act as charge relay system in the active site. A glycan (N-linked (GlcNAc...) asparagine) is linked at N299.

The protein belongs to the serine esterase family.

It localises to the membrane. This is Protein ABHD13 from Danio rerio (Zebrafish).